Here is a 186-residue protein sequence, read N- to C-terminus: Ribosome-recycling factor (186 aa).

It belongs to the RRF family.

The protein resides in the cytoplasm. Its function is as follows. Responsible for the release of ribosomes from messenger RNA at the termination of protein biosynthesis. May increase the efficiency of translation by recycling ribosomes from one round of translation to another. The sequence is that of Ribosome-recycling factor from Bartonella quintana (strain Toulouse) (Rochalimaea quintana).